A 220-amino-acid chain; its full sequence is Protein-L-isoaspartate O-methyltransferase (220 aa).

Serine 67 is an active-site residue.

It belongs to the methyltransferase superfamily. L-isoaspartyl/D-aspartyl protein methyltransferase family.

Its subcellular location is the cytoplasm. It carries out the reaction [protein]-L-isoaspartate + S-adenosyl-L-methionine = [protein]-L-isoaspartate alpha-methyl ester + S-adenosyl-L-homocysteine. Functionally, catalyzes the methyl esterification of L-isoaspartyl residues in peptides and proteins that result from spontaneous decomposition of normal L-aspartyl and L-asparaginyl residues. It plays a role in the repair and/or degradation of damaged proteins. The polypeptide is Protein-L-isoaspartate O-methyltransferase (Chlorobium phaeobacteroides (strain BS1)).